We begin with the raw amino-acid sequence, 431 residues long: MSERVPSIRAEIVSVGDELLKGQRVNTNASFIARSLGSVGIPVVRVTACSDFESEMASVFREALGRADVVLVTGGLGPTRDDRTRKAAGELLGLGLRLDPDALREVERRVTAHGRTMSELMQGQAMVLDGSRAIPNTRGTAAGMIIPAGERFGGSHLVLMPGVPVEMEAMMELTVQPWLRGLSDTTIIHTPVKTTGIGESTLADMLPDIEDSLPEGTSLAYLPHGAGVDLMVSTIARDPLRAERDNAAVVEAIRERAAAFIFAVGTASLEETIIGMLASGGLTLSVAESCTGGLIASRLTDVPGSSVSLMQGFIVYSNSAKEELLGVSRGLIDTHGAVSEEVACAMALGCLRRSGTSIALATTGIAGPGGGSPEKPVGTLCLAIARQVPGSGPSVGVRTLHMHGDRLQNKHRFSEAALRDLWVALRGEQGG.

Belongs to the CinA family.

The polypeptide is CinA-like protein (Chlorobium luteolum (strain DSM 273 / BCRC 81028 / 2530) (Pelodictyon luteolum)).